The following is a 290-amino-acid chain: Glycine--tRNA ligase alpha subunit (290 aa).

The protein belongs to the class-II aminoacyl-tRNA synthetase family. As to quaternary structure, tetramer of two alpha and two beta subunits.

It localises to the cytoplasm. The catalysed reaction is tRNA(Gly) + glycine + ATP = glycyl-tRNA(Gly) + AMP + diphosphate. The chain is Glycine--tRNA ligase alpha subunit from Prochlorococcus marinus (strain NATL2A).